The primary structure comprises 150 residues: MNVILLDKIANLGNLGDQVAVKAGYARNFLLPQGKAVVANTANTEVFEARRAELEAKLVADLTAANERAEKINALESIVIASKAGDEGKLFGSIGNRDIADAVTAAGVELAKSEVRLPLGALRTTGEFEVEVQVHTEVKAIVKLSVVAED.

This sequence belongs to the bacterial ribosomal protein bL9 family.

Binds to the 23S rRNA. This chain is Large ribosomal subunit protein bL9, found in Shewanella sediminis (strain HAW-EB3).